Reading from the N-terminus, the 1013-residue chain is Polyprotein of EF-Ts, chloroplastic (1013 aa).

The N-terminal 43 residues, 1–43 (MLRELGRTATVKAHGRSVLRPVRGPAGRRQVAFTGVRPSVRVF), are a transit peptide targeting the chloroplast. Residues 64 to 133 (GSEYEGTVTT…EKKRVSLELK (70 aa)) enclose the S1 motif 1 domain. Acidic residues predominate over residues 141-150 (SAEESDDIIT). A disordered region spans residues 141–163 (SAEESDDIITEPDREGADATDDD). In terms of domain architecture, S1 motif 2 spans 227 to 331 (MEEVTGKVAR…DGRGISLTHF (105 aa)). The interval 772–798 (QAKAAAPAAPKKEEPKKEEPKKATVAV) is disordered. Basic and acidic residues predominate over residues 781–793 (PKKEEPKKEEPKK).

The protein belongs to the EF-Ts family. In terms of assembly, component of the chloroplast ribosome 30S and 70S subunits, as well as polysomes. As to quaternary structure, component of the chloroplast ribosome 70S subunit, and at low levels, present in polysomes. Associates transiently with chloroplast polysomes.

The protein localises to the plastid. It is found in the chloroplast. In terms of biological role, associates with the EF-Tu.GDP complex and induces the exchange of GDP to GTP. It remains bound to the aminoacyl-tRNA.EF-Tu.GTP complex up to the GTP hydrolysis stage on the ribosome. Functionally, binds to psbD and psbA mRNAs 5'-untranslated regions (UTRs) in vitro. In Chlamydomonas reinhardtii (Chlamydomonas smithii), this protein is Polyprotein of EF-Ts, chloroplastic.